We begin with the raw amino-acid sequence, 548 residues long: MENMENDENIVVGPKPFYPIEEGSAGTQLRKYMERYAKLGAIAFTNAVTGVDYSYAEYLEKSCCLGKALQNYGLVVDGRIALCSENCEEFFIPVIAGLFIGVGVAPTNEIYTLRELVHSLGISKPTIVFSSKKGLDKVITVQKTVTTIKTIVILDSKVDYRGYQCLDTFIKRNTPPGFQASSFKTVEVDRKEQVALIMNSSGSTGLPKGVQLTHENTVTRFSHARDPIYGNQVSPGTAVLTVVPFHHGFGMFTTLGYLICGFRVVMLTKFDEETFLKTLQDYKCTSVILVPTLFAILNKSELLNKYDLSNLVEIASGGAPLSKEVGEAVARRFNLPGVRQGYGLTETTSAIIITPEGDDKPGASGKVVPLFKAKVIDLDTKKSLGPNRRGEVCVKGPMLMKGYVNNPEATKELIDEEGWLHTGDIGYYDEEKHFFIVDRLKSLIKYKGYQVPPAELESVLLQHPSIFDAGVAGVPDPVAGELPGAVVVLESGKNMTEKEVMDYVASQVSNAKRLRGGVRFVDEVPKGLTGKIDGRAIREILKKPVAKM.

Positions 546–548 match the Microbody targeting signal motif; the sequence is AKM.

Belongs to the ATP-dependent AMP-binding enzyme family. Mg(2+) serves as cofactor.

The protein localises to the peroxisome. It catalyses the reaction firefly D-luciferin + ATP + O2 = firefly oxyluciferin + hnu + AMP + CO2 + diphosphate. Its function is as follows. Produces green light with a wavelength of 544 nm. The protein is Luciferin 4-monooxygenase of Nipponoluciola cruciata (Genji firefly).